The primary structure comprises 140 residues: ATP synthase epsilon chain (140 aa).

This sequence belongs to the ATPase epsilon chain family. F-type ATPases have 2 components, CF(1) - the catalytic core - and CF(0) - the membrane proton channel. CF(1) has five subunits: alpha(3), beta(3), gamma(1), delta(1), epsilon(1). CF(0) has three main subunits: a, b and c.

Its subcellular location is the cell inner membrane. Its function is as follows. Produces ATP from ADP in the presence of a proton gradient across the membrane. This Neisseria meningitidis serogroup C / serotype 2a (strain ATCC 700532 / DSM 15464 / FAM18) protein is ATP synthase epsilon chain.